Here is a 76-residue protein sequence, read N- to C-terminus: MGGISIWQLLIIVAIIVLLFGTKKLRTLGTDLGESVKGFKKAMADDKSQPQDASFEKVEAKEAASTEQKAKEKEQA.

The helical transmembrane segment at 1-21 threads the bilayer; that stretch reads MGGISIWQLLIIVAIIVLLFG. The disordered stretch occupies residues 43-76; sequence MADDKSQPQDASFEKVEAKEAASTEQKAKEKEQA.

Belongs to the TatA/E family. The Tat system comprises two distinct complexes: a TatABC complex, containing multiple copies of TatA, TatB and TatC subunits, and a separate TatA complex, containing only TatA subunits. Substrates initially bind to the TatABC complex, which probably triggers association of the separate TatA complex to form the active translocon.

It is found in the cell inner membrane. In terms of biological role, part of the twin-arginine translocation (Tat) system that transports large folded proteins containing a characteristic twin-arginine motif in their signal peptide across membranes. TatA could form the protein-conducting channel of the Tat system. The chain is Sec-independent protein translocase protein TatA from Actinobacillus pleuropneumoniae serotype 5b (strain L20).